The chain runs to 471 residues: Trehalose-binding lipoprotein LpqY (471 aa).

An N-terminal signal peptide occupies residues 1–28 (MDGRQVVRARRWCATAAVALMTASTVAA). Cysteine 29 carries N-palmitoyl cysteine lipidation. Residue cysteine 29 is the site of S-diacylglycerol cysteine attachment. Alpha,alpha-trehalose-binding residues include asparagine 45, glutamate 46, glutamine 79, aspartate 100, asparagine 154, tyrosine 198, tryptophan 279, tyrosine 281, glycine 354, and arginine 424. A disulfide bridge connects residues cysteine 57 and cysteine 375.

This sequence belongs to the bacterial solute-binding protein 1 family. As to quaternary structure, monomer. The complex is composed of two ATP-binding proteins (SugC), two transmembrane proteins (SugA and SugB) and a solute-binding protein (LpqY).

The protein localises to the cell inner membrane. Functionally, part of the ABC transporter complex LpqY-SugA-SugB-SugC, which is highly specific for uptake of trehalose. Involved in the recycling of extracellular trehalose released from trehalose-containing molecules synthesized by M.thermoresistibile. Trehalose uptake is essential for virulence. Binds deuterated trehalose with similar high affinity to trehalose, trehalose analogs including galactotrehalose, 4-azido-4-deoxy-trehalose, 6-azido-6-deoxy-trehalose, 3-azido-3-deoxy-trehalose and mannotrehalose in the order of decreasing affinity, respectively, and 2-azido-2-deoxy-trehalose and kojibiose (alpha1,2-glycosidic bond) with very low affinity. Does not recognize single glucose, 6-amino-6-deoxy-trehalose, trehalose-6-phosphate, nigerose (alpha1,3-glycosidic bond), maltose (alpha1,4-glycosidic bond), isomaltose (alpha1,6-glycosidic bond) or glycerophosphocholine. Decreased recognition of alpha,beta-trehalose and almost no recognition of beta,beta-trehalose. Substrate specificity indicates a strict requirement for an alpha1,1-linked disaccharide. The protein is Trehalose-binding lipoprotein LpqY of Mycolicibacterium thermoresistibile (strain ATCC 19527 / DSM 44167 / CIP 105390 / JCM 6362 / NCTC 10409 / 316) (Mycobacterium thermoresistibile).